We begin with the raw amino-acid sequence, 402 residues long: Elongation factor Tu (402 aa).

One can recognise a tr-type G domain in the interval 16–211 (KEHINIGTIG…AVDSYIDSPV (196 aa)). Positions 25–32 (GHVDHGKT) are G1. 25 to 32 (GHVDHGKT) is a binding site for GTP. Thr-32 contacts Mg(2+). The interval 66-70 (GITIN) is G2. Residues 87–90 (DCPG) form a G3 region. Residues 87 to 91 (DCPGH) and 142 to 145 (NKID) contribute to the GTP site. Positions 142–145 (NKID) are G4. Residues 181-183 (SAR) are G5.

The protein belongs to the TRAFAC class translation factor GTPase superfamily. Classic translation factor GTPase family. EF-Tu/EF-1A subfamily. In terms of assembly, monomer.

It localises to the cytoplasm. The enzyme catalyses GTP + H2O = GDP + phosphate + H(+). Functionally, GTP hydrolase that promotes the GTP-dependent binding of aminoacyl-tRNA to the A-site of ribosomes during protein biosynthesis. This Mesomycoplasma hyopneumoniae (strain J / ATCC 25934 / NCTC 10110) (Mycoplasma hyopneumoniae) protein is Elongation factor Tu.